Here is a 220-residue protein sequence, read N- to C-terminus: Adenylate kinase (220 aa).

ATP is bound at residue 10–15; sequence GSGKST. The segment at 30-59 is NMP; sequence SSGDIIRAEISSRTPLGLEMEKYLSRGDLI. AMP-binding positions include Ser-31, Arg-36, 57–59, 83–86, and Gln-90; these read DLI and GYPR. The tract at residues 124-161 is LID; that stretch reads GRRICSKCGAVYHIEFNPPKIPGKCDICGGDLIQRPDD. Arg-125 lines the ATP pocket. Residues Cys-128 and Cys-131 each contribute to the Zn(2+) site. Residue 134–135 participates in ATP binding; that stretch reads VY. Zn(2+) is bound by residues Cys-148 and Cys-151. AMP contacts are provided by Arg-158 and Arg-169. Gly-197 contributes to the ATP binding site.

This sequence belongs to the adenylate kinase family. Monomer.

It localises to the cytoplasm. The catalysed reaction is AMP + ATP = 2 ADP. Its pathway is purine metabolism; AMP biosynthesis via salvage pathway; AMP from ADP: step 1/1. Functionally, catalyzes the reversible transfer of the terminal phosphate group between ATP and AMP. Plays an important role in cellular energy homeostasis and in adenine nucleotide metabolism. The polypeptide is Adenylate kinase (Pyrococcus horikoshii (strain ATCC 700860 / DSM 12428 / JCM 9974 / NBRC 100139 / OT-3)).